The chain runs to 270 residues: Imidazoleglycerol-phosphate dehydratase 1, chloroplastic (270 aa).

The N-terminal 62 residues, 1–62 (MELSSASAIL…QSQLRQSISC (62 aa)), are a transit peptide targeting the chloroplast. At S63 the chain carries N-acetylserine. Substrate is bound by residues E84, 110 to 118 (HMLDQLASH), 136 to 140 (HHTNE), R162, and R184. Mn(2+)-binding residues include H110, H136, H137, and E140. Mn(2+) contacts are provided by H208, H232, H233, and E236. Substrate-binding positions include 232 to 240 (HHIIEATFK) and 262 to 264 (SSK). A disordered region spans residues 250-270 (TETDPRRGGTIPSSKGVLSRS).

This sequence belongs to the imidazoleglycerol-phosphate dehydratase family. It depends on Mn(2+) as a cofactor.

Its subcellular location is the plastid. The protein localises to the chloroplast. It carries out the reaction D-erythro-1-(imidazol-4-yl)glycerol 3-phosphate = 3-(imidazol-4-yl)-2-oxopropyl phosphate + H2O. The protein operates within amino-acid biosynthesis; L-histidine biosynthesis; L-histidine from 5-phospho-alpha-D-ribose 1-diphosphate: step 6/9. The polypeptide is Imidazoleglycerol-phosphate dehydratase 1, chloroplastic (Arabidopsis thaliana (Mouse-ear cress)).